We begin with the raw amino-acid sequence, 66 residues long: Large ribosomal subunit protein bL35 (66 aa).

Basic residues-rich tracts occupy residues 1–15 (MPKLKTKSGAKKRFK) and 24–40 (HAQRGKRHGMIKRTKKQ). The segment at 1–40 (MPKLKTKSGAKKRFKVTGTGKVMHAQRGKRHGMIKRTKKQ) is disordered.

It belongs to the bacterial ribosomal protein bL35 family.

The protein is Large ribosomal subunit protein bL35 of Bradyrhizobium sp. (strain ORS 278).